Here is a 730-residue protein sequence, read N- to C-terminus: Acetylene hydratase (730 aa).

Residues Cys-9 and Cys-12 each coordinate [4Fe-4S] cluster. Asp-13 is a catalytic residue. [4Fe-4S] cluster is bound by residues Cys-16 and Cys-46. Residues Lys-48, 111-114, Cys-141, 172-173, 177-179, 199-202, 218-221, Ser-296, Gln-300, 416-418, 422-423, 442-444, Asp-460, Arg-465, 602-613, Arg-606, His-676, Asp-699, and Arg-720 each bind W-bis(molybdopterin guanine dinucleotide); these read TEIN, KN, HNW, LDPR, YGTD, ASN, GY, YDQ, and FAGLREDSNFQS.

Belongs to the prokaryotic molybdopterin-containing oxidoreductase family. Monomer. The cofactor is [4Fe-4S] cluster. It depends on W-bis(molybdopterin guanine dinucleotide) as a cofactor.

It carries out the reaction acetaldehyde = acetylene + H2O. Catalyzes the hydration of acetylene to form acetaldehyde. Ethylene cannot act as a substrate. The sequence is that of Acetylene hydratase from Syntrophotalea acetylenica (Pelobacter acetylenicus).